Here is a 395-residue protein sequence, read N- to C-terminus: 1-deoxy-D-xylulose 5-phosphate reductoisomerase (395 aa).

Residues T10, G11, S12, I13, N38, and N123 each contribute to the NADPH site. 1-deoxy-D-xylulose 5-phosphate is bound at residue K124. E125 provides a ligand contact to NADPH. D149 lines the Mn(2+) pocket. S150, E151, S185, and H208 together coordinate 1-deoxy-D-xylulose 5-phosphate. E151 is a binding site for Mn(2+). G214 contributes to the NADPH binding site. 4 residues coordinate 1-deoxy-D-xylulose 5-phosphate: S221, N226, K227, and E230. Residue E230 participates in Mn(2+) binding.

It belongs to the DXR family. Mg(2+) is required as a cofactor. Requires Mn(2+) as cofactor.

The catalysed reaction is 2-C-methyl-D-erythritol 4-phosphate + NADP(+) = 1-deoxy-D-xylulose 5-phosphate + NADPH + H(+). Its pathway is isoprenoid biosynthesis; isopentenyl diphosphate biosynthesis via DXP pathway; isopentenyl diphosphate from 1-deoxy-D-xylulose 5-phosphate: step 1/6. Functionally, catalyzes the NADPH-dependent rearrangement and reduction of 1-deoxy-D-xylulose-5-phosphate (DXP) to 2-C-methyl-D-erythritol 4-phosphate (MEP). The sequence is that of 1-deoxy-D-xylulose 5-phosphate reductoisomerase from Shewanella woodyi (strain ATCC 51908 / MS32).